The sequence spans 1036 residues: MTSIKQILARHDWENPVVTNWNRLPLHTSMSYANERNKREIKQPRKSLNGPWQFSYFENLSDIDEEWRKKDLPTSKIIHVPSNWQLQGDYDVPVYTNVTYPFPVNPPYVPTENPVGAYSKKVFLDNKWLADNTESHVVFNGVGSAFYLWVNGEWVGYSEDSRLPAEFDITEELRAGENRIAVLVLKWSKGSYFEDQDMWRMSGIFRDVDLIRVPKTRFQDLAIETKLDEDLDDATVEVRAQLVGNSADNLSVTAELFYHGMSLFKATEQFGNRVIDERGTNDGQVSLELPVKNPALWSAEVPNLYDIKVSLHDGEENYQIENKKVGIRKVQIKDGLLTLNNQPLLIRGVNKHEFNSKTGYYVDEKTMIDDIRMMKEHNFNAVRLSHYPNASRWYELCDQYGLYLVDEANIETHGVKPMNYLTNDPKYLPLMMERVTRMVQRDYNHPSIIIWSLGNESGYGHNHDAMYQWIKNTDPSRPIQYEGGGADTPATDIIAPMYARVDQDQVEEVNSKWAIKKWIGLSKENRPLILCEYAHSMGNSLGGFNKYWEAFEKYPRLQGGFIWDWVDQGLLTKNNEGQSYYAYGGDFGDYPNDRQFSLDGLLFPDRTPKPALLEAKYCQQYFAFQLEKDPTGKVNYMTVSNKHLFKTVNDATLIYQILSNDQVIETKKIKLNLAPQTEERVSLNFSDNSNEDVYMNCQIVQDSTDGLIRSGTLLAYKQFILRNKPIMISDVRSSDDYEDFLINDATDSLSISLDDAIWQFNKRTGWLSNWIKNGQEKVLTPLKDQFSRAALDNDIGVSEVTNIDPNAWFERWQATGFNHLNEKLVQFNWTALKDEVRITTQHQFLSPIDQHIMFISSKEYRINHVGDLKVYVDVWRQVADPQPARIGLSVQINATTDAVTYSGLGPMENYPDRRSAAIRGKWDASLKELYTPYVFPSENGLRTEVAYLKFDHHVIRALEQRFSFNLSQFSQAQLSAVTHQHLLKPEEGVWLNIDGYHMGVGGDDSWSPSVSPEFLLSNDHYHYSFSWSNAEGEANV.

2 residues coordinate substrate: Asn-97 and Asp-197. Residue Asp-197 participates in Na(+) binding. Glu-411, His-413, and Glu-456 together coordinate Mg(2+). Substrate is bound by residues Glu-456 and 532 to 535 (EYAH). Residue Glu-456 is the Proton donor of the active site. Glu-532 functions as the Nucleophile in the catalytic mechanism. A Mg(2+)-binding site is contributed by Asn-592. Na(+) contacts are provided by Phe-596 and Asp-599. The substrate site is built by Asp-599 and Trp-1006.

This sequence belongs to the glycosyl hydrolase 2 family. In terms of assembly, homotetramer. Mg(2+) is required as a cofactor. The cofactor is Na(+).

It catalyses the reaction Hydrolysis of terminal non-reducing beta-D-galactose residues in beta-D-galactosides.. This chain is Beta-galactosidase, found in Leuconostoc mesenteroides subsp. mesenteroides (strain ATCC 8293 / DSM 20343 / BCRC 11652 / CCM 1803 / JCM 6124 / NCDO 523 / NBRC 100496 / NCIMB 8023 / NCTC 12954 / NRRL B-1118 / 37Y).